We begin with the raw amino-acid sequence, 398 residues long: MNVLVINCGSSSLKYQLIDMDTENALATGLVERIGLEGANLTQKSEGKDKYEIVEPMKDHQDAIRLVLGALIDEKHGVIKSLDEINAIGHRVVHGGEKYAESALVTEEVMKDLEECAKLAPLHNPANIIGINACKALMPNVPMVVVFDTAFHQTMPEKAFVYALPYELYEKEHIRKYGFHGTSHKYVSAKIAEAMGKNIEDLKIITCHLGNGASIAAIKNGKCVDTTMGFTPLEGLVMGTRCGNIDPAVVTYLIDELGYTSQEVNTLMNKKSGIFGVSGVSSDFRDVEAAADKGSKEAQIALDLFRNSVKKYIGAYIAEMNGCDVIVFTAGVGENSIIERGAICRDLEFLGIELDEERNNIRAKVAEISKEGSRIKLFVVPTNEELMIAQDTVSIVSK.

Asparagine 7 lines the Mg(2+) pocket. Lysine 14 is an ATP binding site. Arginine 91 is a substrate binding site. Aspartate 148 functions as the Proton donor/acceptor in the catalytic mechanism. Residues 208 to 212 (HLGNG), 283 to 285 (DFR), and 331 to 335 (GVGEN) each bind ATP. A Mg(2+)-binding site is contributed by glutamate 384.

Belongs to the acetokinase family. As to quaternary structure, homodimer. Requires Mg(2+) as cofactor. The cofactor is Mn(2+).

The protein localises to the cytoplasm. It carries out the reaction acetate + ATP = acetyl phosphate + ADP. The protein operates within metabolic intermediate biosynthesis; acetyl-CoA biosynthesis; acetyl-CoA from acetate: step 1/2. In terms of biological role, catalyzes the formation of acetyl phosphate from acetate and ATP. Can also catalyze the reverse reaction. The chain is Acetate kinase 2 from Clostridium perfringens (strain 13 / Type A).